The sequence spans 261 residues: 5'-nucleotidase SurE (261 aa).

The a divalent metal cation site is built by Asp8, Asp9, Ser39, and Asn94.

It belongs to the SurE nucleotidase family. A divalent metal cation serves as cofactor.

It localises to the cytoplasm. The enzyme catalyses a ribonucleoside 5'-phosphate + H2O = a ribonucleoside + phosphate. In terms of biological role, nucleotidase that shows phosphatase activity on nucleoside 5'-monophosphates. This Methanopyrus kandleri (strain AV19 / DSM 6324 / JCM 9639 / NBRC 100938) protein is 5'-nucleotidase SurE.